The chain runs to 86 residues: Large ribosomal subunit protein bL27 (86 aa).

Positions 1 to 26 are disordered; the sequence is MATKKAGGSSRNGRDSAGRRLGVKKS.

It belongs to the bacterial ribosomal protein bL27 family.

This is Large ribosomal subunit protein bL27 from Rickettsia prowazekii (strain Madrid E).